The chain runs to 113 residues: Nitrogenase-stabilizing/protective protein NifW (113 aa).

This sequence belongs to the NifW family. In terms of assembly, homotrimer; associates with NifD.

Its function is as follows. May protect the nitrogenase Fe-Mo protein from oxidative damage. The protein is Nitrogenase-stabilizing/protective protein NifW of Polaromonas naphthalenivorans (strain CJ2).